Here is a 398-residue protein sequence, read N- to C-terminus: 4-hydroxy-3-methylbut-2-en-1-yl diphosphate synthase (ferredoxin) (398 aa).

4 residues coordinate [4Fe-4S] cluster: Cys306, Cys309, Cys340, and Glu347.

It belongs to the IspG family. [4Fe-4S] cluster serves as cofactor.

The enzyme catalyses (2E)-4-hydroxy-3-methylbut-2-enyl diphosphate + 2 oxidized [2Fe-2S]-[ferredoxin] + H2O = 2-C-methyl-D-erythritol 2,4-cyclic diphosphate + 2 reduced [2Fe-2S]-[ferredoxin] + H(+). The protein operates within isoprenoid biosynthesis; isopentenyl diphosphate biosynthesis via DXP pathway; isopentenyl diphosphate from 1-deoxy-D-xylulose 5-phosphate: step 5/6. Converts 2C-methyl-D-erythritol 2,4-cyclodiphosphate (ME-2,4cPP) into 1-hydroxy-2-methyl-2-(E)-butenyl 4-diphosphate. The chain is 4-hydroxy-3-methylbut-2-en-1-yl diphosphate synthase (ferredoxin) from Synechococcus sp. (strain CC9311).